A 352-amino-acid polypeptide reads, in one-letter code: Homeobox protein Mohawk (352 aa).

Positions 19–54 (GASERERGGRPYSGVLDSPHARPEVGIPDGPPLKDN) are disordered. The homeobox; TALE-type DNA-binding region spans 71-132 (VRHKRQALQD…NARRRLKNTV (62 aa)). Disordered stretches follow at residues 159–189 (VSSD…VHHP) and 245–301 (TRQR…PSKD).

This sequence belongs to the TALE/IRO homeobox family.

The protein localises to the nucleus. In terms of biological role, may act as a morphogenetic regulator of cell adhesion. The sequence is that of Homeobox protein Mohawk (MKX) from Homo sapiens (Human).